A 499-amino-acid polypeptide reads, in one-letter code: Glycerol kinase (499 aa).

T13 lines the ADP pocket. 3 residues coordinate ATP: T13, T14, and S15. Residue T13 participates in sn-glycerol 3-phosphate binding. R17 is an ADP binding site. Residues R83, E84, Y136, and D246 each coordinate sn-glycerol 3-phosphate. R83, E84, Y136, D246, and Q247 together coordinate glycerol. ADP contacts are provided by T268 and G311. Positions 268, 311, 315, and 412 each coordinate ATP. ADP-binding residues include G412 and N416.

This sequence belongs to the FGGY kinase family.

The catalysed reaction is glycerol + ATP = sn-glycerol 3-phosphate + ADP + H(+). It functions in the pathway polyol metabolism; glycerol degradation via glycerol kinase pathway; sn-glycerol 3-phosphate from glycerol: step 1/1. With respect to regulation, inhibited by fructose 1,6-bisphosphate (FBP). Its function is as follows. Key enzyme in the regulation of glycerol uptake and metabolism. Catalyzes the phosphorylation of glycerol to yield sn-glycerol 3-phosphate. This is Glycerol kinase from Francisella philomiragia subsp. philomiragia (strain ATCC 25017 / CCUG 19701 / FSC 153 / O#319-036).